Here is a 174-residue protein sequence, read N- to C-terminus: Transcription factor bHLH36 (174 aa).

The region spanning 1-53 is the bHLH domain; sequence MEKMMHRETERQRRQEMASLYASLRSLLPLHFIKGKRSTSDQVNEAVNYIKYL.

Homodimer. Expressed constitutively in roots, leaves, stems, and flowers.

It localises to the nucleus. This is Transcription factor bHLH36 (BHLH36) from Arabidopsis thaliana (Mouse-ear cress).